Reading from the N-terminus, the 534-residue chain is Zinc finger protein 69 homolog B (534 aa).

Residues Lys37 and Lys40 each participate in a glycyl lysine isopeptide (Lys-Gly) (interchain with G-Cter in SUMO2) cross-link. Residues 74–145 form the KRAB domain; the sequence is LTFKDVSVDF…ERDISGVPSS (72 aa). Residues Lys178 and Lys235 each participate in a glycyl lysine isopeptide (Lys-Gly) (interchain with G-Cter in SUMO2) cross-link. 9 C2H2-type zinc fingers span residues 279–301, 307–329, 335–357, 363–385, 391–413, 419–441, 447–469, 475–497, and 503–525; these read FECN…MRIH, FRCK…QRIH, YECK…VRIH, YECR…LRTH, FTCK…EIIH, YICN…QRTH, YKCK…QRVH, YECS…QRIH, and YDCN…CKTH.

It belongs to the krueppel C2H2-type zinc-finger protein family.

It is found in the nucleus. Functionally, may be involved in transcriptional regulation. Essential for Golgi structural integrity. In Homo sapiens (Human), this protein is Zinc finger protein 69 homolog B (ZFP69B).